Reading from the N-terminus, the 555-residue chain is Glucosylglycerate phosphorylase (555 aa).

D231 acts as the Nucleophile in catalysis.

Belongs to the glycosyl hydrolase 13 family. Glucosylglycerate phosphorylase subfamily.

It catalyses the reaction (2R)-2-O-(alpha-D-glucopyranosyl)-glycerate + phosphate = (R)-glycerate + alpha-D-glucose 1-phosphate. Its function is as follows. Catalyzes the reversible phosphorolysis of glucosylglycerate into alpha-D-glucose 1-phosphate (Glc1P) and D-glycerate. May be a regulator of intracellular levels of glucosylglycerate, a compatible solute that primarily protects organisms facing salt stress and very specific nutritional constraints. Has a very strict substrate specificity. Cannot catalyze the phosphorolysis of sucrose or synthesize sucrose from Glc1P and D-fructose. The protein is Glucosylglycerate phosphorylase of Allomeiothermus silvanus (strain ATCC 700542 / DSM 9946 / NBRC 106475 / NCIMB 13440 / VI-R2) (Thermus silvanus).